A 213-amino-acid polypeptide reads, in one-letter code: NADH dehydrogenase [ubiquinone] iron-sulfur protein 7, mitochondrial (213 aa).

Residues 1–37 constitute a mitochondrion transit peptide; sequence MAVLSAPGLRGFRILGLRSSVGPAVQARSVHQSVATD. Over residues 30–44 the composition is skewed to polar residues; it reads VHQSVATDGPSSTQP. Positions 30-53 are disordered; that stretch reads VHQSVATDGPSSTQPALPKARAVA. Residues C88 and C89 each coordinate [4Fe-4S] cluster. R111 carries the hydroxyarginine modification. The [4Fe-4S] cluster site is built by C153 and C183.

This sequence belongs to the complex I 20 kDa subunit family. Core subunit of respiratory chain NADH dehydrogenase (Complex I) which is composed of 45 different subunits. This is a component of the iron-sulfur (IP) fragment of the enzyme. Requires [4Fe-4S] cluster as cofactor. Hydroxylated ar Arg-111 by NDUFAF5 early in the pathway of assembly of complex I, before the formation of the juncture between peripheral and membrane arms.

Its subcellular location is the mitochondrion inner membrane. The catalysed reaction is a ubiquinone + NADH + 5 H(+)(in) = a ubiquinol + NAD(+) + 4 H(+)(out). Core subunit of the mitochondrial membrane respiratory chain NADH dehydrogenase (Complex I) which catalyzes electron transfer from NADH through the respiratory chain, using ubiquinone as an electron acceptor. Essential for the catalytic activity of complex I. In Pan troglodytes (Chimpanzee), this protein is NADH dehydrogenase [ubiquinone] iron-sulfur protein 7, mitochondrial (NDUFS7).